We begin with the raw amino-acid sequence, 821 residues long: MAEKRKYEPLKIEKKWQEIWDKNEEFEPKDDLSLPKKYILSMFPYPSGRIHMGHVRNYSIGDALARSYRKSGYNVLHPIGFDSFGMPAENAAIKHKIHPKIWTYENIDYMKKELASLGFSFSKKRILATSDPLYTKWEQSFFIKMFEKGLVYRKNAIVNWCEYDQTVLANEQVEDGKCWRCGNDVVQKELPGYYFNITKYASELLDDLKLLEGKWPNQVITMQENWIGRSYGLEFKFSLDEASKETLGGKFDGFEVFTTRPDTIYGVSYTALAPEHPIVKALLESDKFDENKKAKIKAILNQSPRERQASDKDGEFLGIYVVHPLTNEKIPVWVANFILADYGSGAIMAVPAHDQRDFEFASKFNLPIKPVVKPLEGESEGSKAYSEYGVAINSELINGLSSEDAKSFIIEKFEKDGLGKRITNYKLRDWGISRQRYWGAPIPVVHCKCCGVVPEKEENLPIALPEDVEITGEGNPLDKHPTWKFTKCPKCGKDAIRETDTMDTFVESSWYFARFASDEKTWEQKALDEKSVNYWMNVDQYIGGIEHAILHLLYARFFQKVLRDLGYLRDDEPFENLLTQGMVLKDGKKMSKSKGNVVDPDDIINRYGADTARLFILFAAPPQKELEWNDSAVEGAFRFLNRLWEKSQTIKKIDKLPEIDHESLNKDEKFARLKIYEALKKSTEVFGDTFAFNTLIAACMEALNAINAQDNDDVNAEGFFIILNLLEPIVPHIANELSEELFGRKNFTKIAVKEEVFVKDSIALAVTVNGKKRAEFEVTASENESEILKQAKQNVAKWLEGKEILKEIYIKGKLVNFVIKG.

The short motif at 44 to 54 (PYPSGRIHMGH) is the 'HIGH' region element. The 'KMSKS' region motif lies at 589–593 (KMSKS). K592 contacts ATP.

Belongs to the class-I aminoacyl-tRNA synthetase family.

Its subcellular location is the cytoplasm. The enzyme catalyses tRNA(Leu) + L-leucine + ATP = L-leucyl-tRNA(Leu) + AMP + diphosphate. In Campylobacter concisus (strain 13826), this protein is Leucine--tRNA ligase.